A 198-amino-acid chain; its full sequence is uncharacterized protein (198 aa).

The segment at 40–111 is disordered; sequence GSALPPQAPT…LSRGAGQGAP (72 aa). The segment covering 60–74 has biased composition (low complexity); sequence SSRTPGPRPPRSTLR.

This is an uncharacterized protein from Homo sapiens (Human).